Reading from the N-terminus, the 89-residue chain is MAGIGSRRIVIEVPEGLRVPPGELEKRLRIELALRLYEKGIASLGQARKIAGLSKWDFLELLAREGIPLHYSEEELKEDLEVAKKLAEK.

This sequence belongs to the UPF0175 family.

The protein is UPF0175 protein APE_0276a of Aeropyrum pernix (strain ATCC 700893 / DSM 11879 / JCM 9820 / NBRC 100138 / K1).